The following is a 65-amino-acid chain: Putative beta-neurotoxin RjAa12 (65 aa).

The 64-residue stretch at 1–64 folds into the LCN-type CS-alpha/beta domain; it reads KEGYPVGRDG…VWDSSTNKCG (64 aa). Cystine bridges form between Cys11-Cys63, Cys15-Cys37, Cys22-Cys44, and Cys26-Cys46.

This sequence belongs to the long (4 C-C) scorpion toxin superfamily. Sodium channel inhibitor family. Beta subfamily. Expressed by the venom gland.

It is found in the secreted. In terms of biological role, beta toxins bind voltage-independently at site-4 of sodium channels (Nav) and shift the voltage of activation toward more negative potentials thereby affecting sodium channel activation and promoting spontaneous and repetitive firing. The chain is Putative beta-neurotoxin RjAa12 from Rhopalurus junceus (Caribbean blue scorpion).